The following is a 1221-amino-acid chain: DNA-directed RNA polymerase subunit beta (1221 aa).

Residues glutamate 1176–lysine 1221 are disordered. Residues glutamate 1183–aspartate 1215 show a composition bias toward acidic residues.

Belongs to the RNA polymerase beta chain family. In terms of assembly, the RNAP catalytic core consists of 2 alpha, 1 beta, 1 beta' and 1 omega subunit. When a sigma factor is associated with the core the holoenzyme is formed, which can initiate transcription.

It catalyses the reaction RNA(n) + a ribonucleoside 5'-triphosphate = RNA(n+1) + diphosphate. In terms of biological role, DNA-dependent RNA polymerase catalyzes the transcription of DNA into RNA using the four ribonucleoside triphosphates as substrates. This Lactobacillus delbrueckii subsp. bulgaricus (strain ATCC 11842 / DSM 20081 / BCRC 10696 / JCM 1002 / NBRC 13953 / NCIMB 11778 / NCTC 12712 / WDCM 00102 / Lb 14) protein is DNA-directed RNA polymerase subunit beta.